The following is a 209-amino-acid chain: Glutathione S-transferase 1-1 (209 aa).

The GST N-terminal domain occupies 1 to 81 (MADFYYLPGS…YLVEKYGKTD (81 aa)). Glutathione-binding positions include Ser-10, 51–53 (HTI), and 65–67 (ESR). The region spanning 87–209 (CPKKRAVINQ…GCLEFKKYFE (123 aa)) is the GST C-terminal domain.

The protein belongs to the GST superfamily. Theta family. As to quaternary structure, homodimer.

The enzyme catalyses RX + glutathione = an S-substituted glutathione + a halide anion + H(+). It carries out the reaction 1,1,1-trichloro-2,2-bis(4-chlorophenyl)ethane = 1,1-dichloro-2,2-bis(4-chlorophenyl)ethylene + chloride + H(+). Functionally, conjugation of reduced glutathione to a wide number of exogenous and endogenous hydrophobic electrophiles. Has DDT dehydrochlorinase activity. The polypeptide is Glutathione S-transferase 1-1 (GstD1) (Drosophila simulans (Fruit fly)).